The chain runs to 430 residues: Dynactin subunit 2 (430 aa).

Disordered regions lie at residues 1-51 (MSEG…IDRS) and 201-228 (SLSSSTTEQNTQQPSNNNTTTNITSSSS). Polar residues predominate over residues 32–44 (SISNLADESSELV). Coiled coils occupy residues 241–319 (TGEQ…QDET) and 397–430 (DDSFKSNLLTIKSNIQQLESRIETLQNRQQQQQQ).

The protein belongs to the dynactin subunit 2 family. As to quaternary structure, subunit of dynactin, a multiprotein complex associated with dynein.

It localises to the cytoplasm. It is found in the cytoskeleton. The protein resides in the membrane. Modulates cytoplasmic dynein binding to an organelle, and plays a role in prometaphase chromosome alignment and spindle organization during mitosis. This chain is Dynactin subunit 2 (dynB), found in Dictyostelium discoideum (Social amoeba).